The sequence spans 634 residues: GTP-binding protein 4 (634 aa).

Residue Ala-2 is modified to N-acetylalanine. N6-acetyllysine; alternate is present on Lys-103. Lys-103 participates in a covalent cross-link: Glycyl lysine isopeptide (Lys-Gly) (interchain with G-Cter in SUMO2); alternate. A Phosphoserine modification is found at Ser-122. The OBG-type G domain maps to 169 to 340 (RTLLLCGYPN…VKTEACDRLL (172 aa)). GTP is bound by residues 175-182 (GYPNVGKS), 221-225 (DTPGI), and 289-292 (NKCD). Lys-332 is covalently cross-linked (Glycyl lysine isopeptide (Lys-Gly) (interchain with G-Cter in SUMO2)). 3 positions are modified to phosphoserine: Ser-468, Ser-470, and Ser-472. Residues 495 to 517 (ILESKEKNTQGPRMPRTAKKVQR) form a disordered region. The residue at position 522 (Lys-522) is an N6-acetyllysine. The tract at residues 529–634 (VDMDDKDDAH…KRKAGKKDRR (106 aa)) is disordered. Lys-534 is covalently cross-linked (Glycyl lysine isopeptide (Lys-Gly) (interchain with G-Cter in SUMO2)). Residues 544-554 (RRSRSITRKRK) are compositionally biased toward basic residues. Ser-558 carries the phosphoserine modification. The segment covering 560-572 (PPSSVARSGSCSR) has biased composition (polar residues). Residues 573-585 (TPRDVSGLRDVKM) show a composition bias toward basic and acidic residues. A compositionally biased stretch (basic residues) spans 586–604 (VKKAKTMMKNAQKKMNRLG). Residues 605 to 618 (KKGEADRHVFDMKP) show a composition bias toward basic and acidic residues. The span at 619–634 (KHLLSGKRKAGKKDRR) shows a compositional bias: basic residues.

This sequence belongs to the TRAFAC class OBG-HflX-like GTPase superfamily. OBG GTPase family. NOG subfamily. As to quaternary structure, associates with pre-60S ribosomal particles. Interacts with MINAS-60 (product of an alternative open reading frame of RBM10).

Its subcellular location is the nucleus. It localises to the nucleolus. In terms of biological role, involved in the biogenesis of the 60S ribosomal subunit. Acts as a TP53 repressor, preventing TP53 stabilization and cell cycle arrest. This Homo sapiens (Human) protein is GTP-binding protein 4.